Here is a 194-residue protein sequence, read N- to C-terminus: Imidazoleglycerol-phosphate dehydratase (194 aa).

This sequence belongs to the imidazoleglycerol-phosphate dehydratase family.

The protein resides in the cytoplasm. It carries out the reaction D-erythro-1-(imidazol-4-yl)glycerol 3-phosphate = 3-(imidazol-4-yl)-2-oxopropyl phosphate + H2O. The protein operates within amino-acid biosynthesis; L-histidine biosynthesis; L-histidine from 5-phospho-alpha-D-ribose 1-diphosphate: step 6/9. The sequence is that of Imidazoleglycerol-phosphate dehydratase from Bacillus licheniformis (strain ATCC 14580 / DSM 13 / JCM 2505 / CCUG 7422 / NBRC 12200 / NCIMB 9375 / NCTC 10341 / NRRL NRS-1264 / Gibson 46).